The following is a 90-amino-acid chain: Probable Fe(2+)-trafficking protein (90 aa).

This sequence belongs to the Fe(2+)-trafficking protein family.

Its function is as follows. Could be a mediator in iron transactions between iron acquisition and iron-requiring processes, such as synthesis and/or repair of Fe-S clusters in biosynthetic enzymes. The chain is Probable Fe(2+)-trafficking protein from Variovorax paradoxus (strain S110).